The primary structure comprises 127 residues: UPF0102 protein Cpha266_0037 (127 aa).

It belongs to the UPF0102 family.

The polypeptide is UPF0102 protein Cpha266_0037 (Chlorobium phaeobacteroides (strain DSM 266 / SMG 266 / 2430)).